The primary structure comprises 77 residues: MENFDKVKDIIVDRLGVDADKVTEDASFKDDLGADSLDIAELVMELEDEFGTEIPDEEAEKINTVGDAVKFINSLEK.

The Carrier domain maps to 1-76 (MENFDKVKDI…DAVKFINSLE (76 aa)). Ser-36 carries the O-(pantetheine 4'-phosphoryl)serine modification.

This sequence belongs to the acyl carrier protein (ACP) family. 4'-phosphopantetheine is transferred from CoA to a specific serine of apo-ACP by AcpS. This modification is essential for activity because fatty acids are bound in thioester linkage to the sulfhydryl of the prosthetic group.

Its subcellular location is the cytoplasm. The protein operates within lipid metabolism; fatty acid biosynthesis. Its function is as follows. Carrier of the growing fatty acid chain in fatty acid biosynthesis. This is Acyl carrier protein from Staphylococcus aureus (strain Mu3 / ATCC 700698).